We begin with the raw amino-acid sequence, 140 residues long: Large ribosomal subunit protein uL11 (140 aa).

The protein belongs to the universal ribosomal protein uL11 family. In terms of assembly, part of the ribosomal stalk of the 50S ribosomal subunit. Interacts with L10 and the large rRNA to form the base of the stalk. L10 forms an elongated spine to which L12 dimers bind in a sequential fashion forming a multimeric L10(L12)X complex. In terms of processing, one or more lysine residues are methylated.

Its function is as follows. Forms part of the ribosomal stalk which helps the ribosome interact with GTP-bound translation factors. The protein is Large ribosomal subunit protein uL11 of Syntrophotalea carbinolica (strain DSM 2380 / NBRC 103641 / GraBd1) (Pelobacter carbinolicus).